The following is a 534-amino-acid chain: MVFFKDLFIFKSLIKGSLYSGHMKKKLLNYLPLFALMLFTVSMMAQTAPDEDTNSSIACPSSGVFQNNTTRDVDIANPDNVGTVDDRTCYADYYETSVYGETWGAYNITFNSNHWDAPNTLQPRIERSLSRSQETGVGSYARFTGTLRILEVGNTGTFGSTGSYLMQAKGKHTGGGGSNDPAICLYLARPVYGPDANGNQVQVSFDIWREQINFRGGSGAAGRTEVFLRNVLKDEIIDIELEVGFRQDPNDPNLKIHYSDAIIGGQVFNWNIPEPERGRESGIRYGVYRVKGGRAQMRWANTTYQKVEVVDNSTIPAADIYRIKNVETGEYLTSSGSSIIASTSGTGSDKEWEIISAGSGSSYVNIDSQVRGIIRFTGGSSNPGLVSTNFSPPNTDTDKVWTVIDNNDGTVSFETRNLGRFLYHDTNNMITHSANIDDRSKWNLESTTLSVDSQQIASVGVYPNPTVDGFTISLDNISAEKVQIFNLLGMLVYEQKTNESSIHIDNMDNFDSGMYIISVTANDNKVYQTKLIVN.

A signal peptide spans 1–47 (MVFFKDLFIFKSLIKGSLYSGHMKKKLLNYLPLFALMLFTVSMMAQT). Cysteines 59 and 89 form a disulfide. Residues glycine 63, asparagine 68, aspartate 86, threonine 88, alanine 91, and aspartate 92 each coordinate Ca(2+). Tyrosine 164 contributes to the substrate binding site. Catalysis depends on lysine 169, which acts as the Proton acceptor. Residues 218–223 (SGAAGR) and 288–291 (YRVK) contribute to the substrate site. Tyrosine 288 serves as the catalytic Proton donor/acceptor. The tract at residues 316–449 (PAADIYRIKN…SKWNLESTTL (134 aa)) is ulvan-binding domain. A propeptide spans 450-534 (SVDSQQIASV…KVYQTKLIVN (85 aa)) (removed by the type IX secretion system (T9SS)).

This sequence belongs to the polysaccharide lyase 28 family. Ca(2+) serves as cofactor.

It localises to the secreted. In terms of biological role, ulvan lyase involved in ulvan degradation. Ulvan is the main polysaccharide component of the Ulvales (green seaweed) cell wall. It is composed of disaccharide building blocks comprising 3-sulfated rhamnose (Rha3S) linked to D-glucuronic acid (GlcA), L-iduronic acid (IduA), or D-xylose (Xyl). Ulvan lyase catalyzes the endolytic cleavage of the glycosidic bond between Rha3S and the uronic acids GlcA or IduA, producing oligosaccharides that have unsaturated 4-deoxy-L-threo-hex-4-enopyranosiduronic acid (deltaUA) at the non-reducing end. This results eventually in the degradation of the ulvan polysaccharide into deltaUA-Rha3S disaccharides and deltaUA-Rha3S-Xyl-Rha3S tetrasaccharides. This chain is Ulvan lyase NLR42, found in Nonlabens ulvanivorans (Persicivirga ulvanivorans).